We begin with the raw amino-acid sequence, 343 residues long: L-threonine 3-dehydrogenase (343 aa).

Position 38 (C38) interacts with Zn(2+). Active-site charge relay system residues include T40 and H43. Zn(2+) is bound by residues H63, E64, C93, C96, C99, and C107. NAD(+)-binding positions include I176, D196, R201, 261–263, and 286–288; these read LGI and IAG.

The protein belongs to the zinc-containing alcohol dehydrogenase family. As to quaternary structure, homotetramer. Requires Zn(2+) as cofactor.

Its subcellular location is the cytoplasm. The enzyme catalyses L-threonine + NAD(+) = (2S)-2-amino-3-oxobutanoate + NADH + H(+). It participates in amino-acid degradation; L-threonine degradation via oxydo-reductase pathway; glycine from L-threonine: step 1/2. Catalyzes the NAD(+)-dependent oxidation of L-threonine to 2-amino-3-ketobutyrate. This is L-threonine 3-dehydrogenase from Thermus thermophilus (strain ATCC 27634 / DSM 579 / HB8).